Consider the following 201-residue polypeptide: MAGSFAELARQADKSRDTMLVPKTALETPPLEIHTLGDEVLRQPARRIGKVNEQVRELARDMLRSMYTAKGIGLAAPQVGIHQQLLVIDLDLENAATPPLVLINPEITAASAGLDTYEEGCLSIPGVYLDVVRPTAIELSFRDEMGRPRKMKADGLMARCIQHEMDHLNGVLFVDRVTDQDGLQKELKEKGFERQDVRSVA.

Fe cation contacts are provided by Cys-121 and His-163. Residue Glu-164 is part of the active site. His-167 lines the Fe cation pocket.

Belongs to the polypeptide deformylase family. It depends on Fe(2+) as a cofactor.

It catalyses the reaction N-terminal N-formyl-L-methionyl-[peptide] + H2O = N-terminal L-methionyl-[peptide] + formate. Removes the formyl group from the N-terminal Met of newly synthesized proteins. Requires at least a dipeptide for an efficient rate of reaction. N-terminal L-methionine is a prerequisite for activity but the enzyme has broad specificity at other positions. The sequence is that of Peptide deformylase from Synechococcus sp. (strain CC9605).